A 320-amino-acid polypeptide reads, in one-letter code: PUP1 protein homolog (320 aa).

2 consecutive transmembrane segments (helical) span residues 66–85 and 100–119; these read MWGG…AYRY and FVLG…RSMY. The interval 205-320 is disordered; the sequence is GGVFNGSPFM…QSGRYGGNRS (116 aa). Residue Ser-230 is modified to Phosphoserine. A compositionally biased stretch (polar residues) spans 253-266; sequence GDNSSSSSWENIRN. Basic and acidic residues predominate over residues 267 to 284; it reads TSRDQSQESDASVDHESD.

It belongs to the PUP1 family.

The protein localises to the mitochondrion membrane. This chain is PUP1 protein homolog, found in Saccharomyces cerevisiae (strain ATCC 204508 / S288c) (Baker's yeast).